The chain runs to 186 residues: Elongation factor P (186 aa).

This sequence belongs to the elongation factor P family.

Its subcellular location is the cytoplasm. The protein operates within protein biosynthesis; polypeptide chain elongation. In terms of biological role, involved in peptide bond synthesis. Stimulates efficient translation and peptide-bond synthesis on native or reconstituted 70S ribosomes in vitro. Probably functions indirectly by altering the affinity of the ribosome for aminoacyl-tRNA, thus increasing their reactivity as acceptors for peptidyl transferase. In Shewanella denitrificans (strain OS217 / ATCC BAA-1090 / DSM 15013), this protein is Elongation factor P.